The primary structure comprises 44 residues: Photosystem II reaction center protein K (44 aa).

Residues M1–S7 constitute a propeptide that is removed on maturation. A helical transmembrane segment spans residues L23–F43.

This sequence belongs to the PsbK family. As to quaternary structure, PSII is composed of 1 copy each of membrane proteins PsbA, PsbB, PsbC, PsbD, PsbE, PsbF, PsbH, PsbI, PsbJ, PsbK, PsbL, PsbM, PsbT, PsbX, PsbY, PsbZ, Psb30/Ycf12, at least 3 peripheral proteins of the oxygen-evolving complex and a large number of cofactors. It forms dimeric complexes.

Its subcellular location is the plastid. It localises to the chloroplast thylakoid membrane. In terms of biological role, one of the components of the core complex of photosystem II (PSII). PSII is a light-driven water:plastoquinone oxidoreductase that uses light energy to abstract electrons from H(2)O, generating O(2) and a proton gradient subsequently used for ATP formation. It consists of a core antenna complex that captures photons, and an electron transfer chain that converts photonic excitation into a charge separation. This chain is Photosystem II reaction center protein K, found in Phaeodactylum tricornutum (strain CCAP 1055/1).